Reading from the N-terminus, the 350-residue chain is Flap endonuclease 1 (350 aa).

Residues M1–K101 are N-domain. The Mg(2+) site is built by D30, D83, E155, E157, D176, D178, and D239. The tract at residues E119–G261 is I-domain. The interaction with PCNA stretch occupies residues R341 to F349.

This sequence belongs to the XPG/RAD2 endonuclease family. FEN1 subfamily. In terms of assembly, interacts with PCNA. PCNA stimulates the nuclease activity without altering cleavage specificity. It depends on Mg(2+) as a cofactor.

Structure-specific nuclease with 5'-flap endonuclease and 5'-3' exonuclease activities involved in DNA replication and repair. During DNA replication, cleaves the 5'-overhanging flap structure that is generated by displacement synthesis when DNA polymerase encounters the 5'-end of a downstream Okazaki fragment. Binds the unpaired 3'-DNA end and kinks the DNA to facilitate 5' cleavage specificity. Cleaves one nucleotide into the double-stranded DNA from the junction in flap DNA, leaving a nick for ligation. Also involved in the base excision repair (BER) pathway. Acts as a genome stabilization factor that prevents flaps from equilibrating into structures that lead to duplications and deletions. Also possesses 5'-3' exonuclease activity on nicked or gapped double-stranded DNA. This Aeropyrum pernix (strain ATCC 700893 / DSM 11879 / JCM 9820 / NBRC 100138 / K1) protein is Flap endonuclease 1.